A 290-amino-acid polypeptide reads, in one-letter code: Acetylglutamate kinase (290 aa).

Substrate contacts are provided by residues 60-61, Arg82, and Asn187; that span reads GG.

It belongs to the acetylglutamate kinase family. ArgB subfamily.

It localises to the cytoplasm. It catalyses the reaction N-acetyl-L-glutamate + ATP = N-acetyl-L-glutamyl 5-phosphate + ADP. It functions in the pathway amino-acid biosynthesis; L-arginine biosynthesis; N(2)-acetyl-L-ornithine from L-glutamate: step 2/4. In terms of biological role, catalyzes the ATP-dependent phosphorylation of N-acetyl-L-glutamate. This is Acetylglutamate kinase from Marinobacter nauticus (strain ATCC 700491 / DSM 11845 / VT8) (Marinobacter aquaeolei).